The sequence spans 126 residues: UPF0332 protein glr0978 (126 aa).

Belongs to the UPF0332 family.

This chain is UPF0332 protein glr0978, found in Gloeobacter violaceus (strain ATCC 29082 / PCC 7421).